A 3412-amino-acid chain; its full sequence is Genome polyprotein (3412 aa).

The disordered stretch occupies residues 1 to 30 (MAGKAILKGKGGGPPRRVSKETAKKTRQSR). At 1-98 (MAGKAILKGK…LQRRGKRRSA (98 aa)) the chain is on the cytoplasmic side. A propeptide spans 97-117 (SAVDWTGWLLVVVLLGVTLAA) (ER anchor for the capsid protein C, removed in mature form by serine protease NS3). Residues 99–119 (VDWTGWLLVVVLLGVTLAATV) traverse the membrane as a helical segment. The Extracellular portion of the chain corresponds to 120-242 (RKERDGTTVI…HLTRVEGWVW (123 aa)). Residue Asn-144 is glycosylated (N-linked (GlcNAc...) asparagine; by host). Residues 243 to 260 (KNKVLTLAVIAVVWLTVE) traverse the membrane as a helical segment. Residue Ser-261 is a topological domain, cytoplasmic. Residues 262–280 (VVTRVAVVVVLLCLAPVYA) traverse the membrane as a helical segment. At 281–727 (SRCTHLENRD…HTVLGGAFNS (447 aa)) the chain is on the extracellular side. Disulfide bonds link Cys-283/Cys-310, Cys-340/Cys-396, Cys-340/Cys-401, Cys-354/Cys-385, Cys-372/Cys-396, and Cys-372/Cys-401. The fusion peptide stretch occupies residues 378–391 (DRGWGNHCGLFGKG). Residue Asn-434 is glycosylated (N-linked (GlcNAc...) asparagine; by host). 2 disulfide bridges follow: Cys-466-Cys-570 and Cys-587-Cys-618. Residues 728-748 (LFGGVGFLPKILVGVVLAWLG) traverse the membrane as a helical segment. Topologically, residues 749 to 755 (LNMRNPT) are cytoplasmic. Residues 756–776 (MSMSFLLAGGLVLAMTLGVGA) form a helical membrane-spanning segment. Over 777-1187 (DVGCAVDTER…LVKIESLVRY (411 aa)) the chain is Extracellular. Cystine bridges form between Cys-780/Cys-791, Cys-831/Cys-920, Cys-955/Cys-1000, Cys-1057/Cys-1106, Cys-1068/Cys-1090, and Cys-1089/Cys-1093. 3 N-linked (GlcNAc...) asparagine; by host glycosylation sites follow: Asn-861, Asn-983, and Asn-999. A helical transmembrane segment spans residues 1188-1208 (VVAVGITFHLELGPEIVALTL). Over 1209–1236 (LQAVFELRVGLLSAFALRSNLTVREMVT) the chain is Cytoplasmic. The chain crosses the membrane as a helical span at residues 1237–1257 (IYFLLLVLELGLPSEGLGALW). Topologically, residues 1258–1293 (KWGDALAMGALIFRACTAEEKTGVGLLLMALMTQQD) are lumenal. Residues 1294–1314 (LATVHYGLMLFLGVASCCSIW) form a helical membrane-spanning segment. Over 1315 to 1327 (KLIRGHREQKGLT) the chain is Cytoplasmic. Residues 1328–1348 (WIVPLAGLLGGEGSGVRLVAF) form a helical membrane-spanning segment. At 1349 to 1359 (WELTVHGRRRS) the chain is on the cytoplasmic side. A helical membrane pass occupies residues 1360–1378 (FSEPLTVVGVMLTLASGMI). Residues 1379–1382 (RHTS) lie on the Lumenal side of the membrane. Residues 1383–1403 (QEALCALAVASFLLLMLVLGT) form a helical membrane-spanning segment. Residues 1404–1454 (RKMQLVAEWSGCVEWHPELMNEGGEVSLRVRQDSMGNFHLTELEKEERVMA) are Cytoplasmic-facing. Positions 1410–1449 (AEWSGCVEWHPELMNEGGEVSLRVRQDSMGNFHLTELEKE) are interacts with and activates NS3 protease. The helical intramembrane region spans 1455–1475 (FWLLAGLAASAFHWSGILGVM). At 1476–2160 (GLWTLSEMLR…KMAERDAPEA (685 aa)) the chain is on the cytoplasmic side. Positions 1490–1669 (SGLVFSGQGG…EAEKSRPNLP (180 aa)) constitute a Peptidase S7 domain. Residues His-1543, Asp-1567, and Ser-1627 each act as charge relay system; for serine protease NS3 activity in the active site. In terms of domain architecture, Helicase ATP-binding spans 1675–1831 (TGWTAKGQIT…ESNGAISSEE (157 aa)). An ATP-binding site is contributed by 1688–1695 (MHPGSGKT). A DEAH box motif is present at residues 1779–1782 (DEAH). One can recognise a Helicase C-terminal domain in the interval 1841–2000 (DGFDWITEYE…TLRGPVATFY (160 aa)). Lys-1883 is modified (N6-acetyllysine; by host). A helical membrane pass occupies residues 2161-2181 (FLTVVEMMVLGLATLGVVWCF). Topologically, residues 2182–2189 (VVRTSISR) are lumenal. An intramembrane region (helical) is located at residues 2190–2210 (MMLGTLVLLASLALLWAGGVS). Residue Tyr-2211 is a topological domain, lumenal. Residues 2212–2232 (GNMAGVALIFYTLLTVLQPEA) traverse the membrane as a helical segment. Over 2233 to 2244 (GKQRSSDDNKLA) the chain is Cytoplasmic. A helical transmembrane segment spans residues 2245 to 2265 (YFLLTLCSLAGLVAANEMGFL). Topologically, residues 2266–2299 (EKTKADLSTVLWSEHEELRSWEEWTNIDIQPARS) are lumenal. The helical intramembrane region spans 2300 to 2320 (WGTYVLVVSLFTPYIIHQLQT). The Lumenal segment spans residues 2321 to 2343 (KIQQLVNSAVATGAQAMRDLGGG). The helical intramembrane region spans 2344-2364 (APFFGVAGHVMALGVVSLVGA). Residues 2365 to 2368 (TPTS) lie on the Lumenal side of the membrane. A helical transmembrane segment spans residues 2369–2389 (LVVGVGLAAFHLAIVVSGLEA). The Cytoplasmic segment spans residues 2390–2430 (ELTQRAHKVFFSAMVRNPMVDGDVINPFGEGEAKPALYERK). A helical transmembrane segment spans residues 2431 to 2451 (MSLVLAIVLCLMSVVMNRTVP). The Lumenal segment spans residues 2452–2476 (STPRLLLWDWRQRDNCSNQRRTPFG). The helical transmembrane segment at 2477–2497 (RCQACGLSGVVRGSLWGFCPL) threads the bilayer. The Cytoplasmic segment spans residues 2498-3412 (GHRLWLRASG…WESKLESSII (915 aa)). One can recognise an mRNA cap 0-1 NS5-type MT domain in the interval 2511–2775 (GGSEGDTLGD…ELDLGVGTRC (265 aa)). Residue Ser-2566 participates in S-adenosyl-L-methionine binding. Residue Ser-2566 is modified to Phosphoserine. Lys-2571 serves as the catalytic For 2'-O-MTase activity. Gly-2596, Trp-2597, Ile-2615, Asp-2641, and Val-2642 together coordinate S-adenosyl-L-methionine. Asp-2656 (for 2'-O-MTase activity) is an active-site residue. Ile-2657 serves as a coordination point for S-adenosyl-L-methionine. Catalysis depends on for 2'-O-MTase activity residues Lys-2693 and Glu-2729. The interval 2729–2733 (EMYYS) is interaction with host SCRIB. Tyr-2731 is an S-adenosyl-L-methionine binding site. The Zn(2+) site is built by Glu-2948, His-2952, Cys-2957, and Cys-2960. A RdRp catalytic domain is found at 3038–3187 (GLFYADDTAG…RPVDDRFSGA (150 aa)). Residues His-3222, Cys-3238, and Cys-3357 each contribute to the Zn(2+) site.

This sequence in the N-terminal section; belongs to the class I-like SAM-binding methyltransferase superfamily. mRNA cap 0-1 NS5-type methyltransferase family. In terms of assembly, homodimer. Interacts (via N-terminus) with host EXOC1 (via C-terminus); this interaction results in EXOC1 degradation through the proteasome degradation pathway. As to quaternary structure, forms heterodimers with envelope protein E in the endoplasmic reticulum and Golgi. Homodimer; in the endoplasmic reticulum and Golgi. Interacts with protein prM. Interacts with non-structural protein 1. In terms of assembly, homodimer; Homohexamer when secreted. Interacts with envelope protein E. As to quaternary structure, interacts (via N-terminus) with serine protease NS3. Forms a heterodimer with serine protease NS3. May form homooligomers. In terms of assembly, forms a heterodimer with NS2B. Interacts with non-structural protein 2A (via N-terminus). Interacts with NS4B. Interacts with unphosphorylated RNA-directed RNA polymerase NS5; this interaction stimulates RNA-directed RNA polymerase NS5 guanylyltransferase activity. As to quaternary structure, interacts with serine protease NS3. Interacts with NS1. Homodimer. Interacts with host STAT2; this interaction inhibits the phosphorylation of the latter, and, when all viral proteins are present (polyprotein), targets STAT2 for degradation. Interacts with serine protease NS3. Interacts with host SCRIB; this interaction targets NS5 to the cell membrane periphery and nucleus, thereby allowing efficient host nuclear STAT1 inhibition. Post-translationally, specific enzymatic cleavages in vivo yield mature proteins. Cleavages in the lumen of endoplasmic reticulum are performed by host signal peptidase, whereas cleavages in the cytoplasmic side are performed by serine protease NS3. Signal cleavage at the 2K-4B site requires a prior NS3 protease-mediated cleavage at the 4A-2K site. In terms of processing, cleaved in post-Golgi vesicles by a host furin, releasing the mature small envelope protein M, and peptide pr. This cleavage is incomplete as up to 30% of viral particles still carry uncleaved prM. N-glycosylated. Post-translationally, N-glycosylated. The excreted form is glycosylated and this is required for efficient secretion of the protein from infected cells. In terms of processing, acetylated by host KAT5. Acetylation modulates NS3 RNA-binding and unwinding activities and plays an important positive role for viral replication. Phosphorylated on serines residues. This phosphorylation may trigger NS5 nuclear localization.

It localises to the virion. The protein resides in the host nucleus. Its subcellular location is the host cytoplasm. It is found in the host perinuclear region. The protein localises to the secreted. It localises to the virion membrane. The protein resides in the host endoplasmic reticulum membrane. The catalysed reaction is Selective hydrolysis of -Xaa-Xaa-|-Yaa- bonds in which each of the Xaa can be either Arg or Lys and Yaa can be either Ser or Ala.. It catalyses the reaction RNA(n) + a ribonucleoside 5'-triphosphate = RNA(n+1) + diphosphate. The enzyme catalyses a ribonucleoside 5'-triphosphate + H2O = a ribonucleoside 5'-diphosphate + phosphate + H(+). It carries out the reaction ATP + H2O = ADP + phosphate + H(+). The catalysed reaction is a 5'-end (5'-triphosphoguanosine)-ribonucleoside in mRNA + S-adenosyl-L-methionine = a 5'-end (N(7)-methyl 5'-triphosphoguanosine)-ribonucleoside in mRNA + S-adenosyl-L-homocysteine. It catalyses the reaction a 5'-end (N(7)-methyl 5'-triphosphoguanosine)-ribonucleoside in mRNA + S-adenosyl-L-methionine = a 5'-end (N(7)-methyl 5'-triphosphoguanosine)-(2'-O-methyl-ribonucleoside) in mRNA + S-adenosyl-L-homocysteine + H(+). Plays a role in virus budding by binding to the cell membrane and gathering the viral RNA into a nucleocapsid that forms the core of a mature virus particle. During virus entry, may induce genome penetration into the host cytoplasm after hemifusion induced by the surface proteins. Can migrate to the cell nucleus where it modulates host functions. Its function is as follows. Inhibits RNA silencing by interfering with host Dicer. In terms of biological role, prevents premature fusion activity of envelope proteins in trans-Golgi by binding to envelope protein E at pH6.0. After virion release in extracellular space, gets dissociated from E dimers. Functionally, acts as a chaperone for envelope protein E during intracellular virion assembly by masking and inactivating envelope protein E fusion peptide. prM is the only viral peptide matured by host furin in the trans-Golgi network probably to avoid catastrophic activation of the viral fusion activity in acidic Golgi compartment prior to virion release. prM-E cleavage is inefficient, and many virions are only partially matured. These uncleaved prM would play a role in immune evasion. May play a role in virus budding. Exerts cytotoxic effects by activating a mitochondrial apoptotic pathway through M ectodomain. May display a viroporin activity. Its function is as follows. Binds to host cell surface receptor and mediates fusion between viral and cellular membranes. Envelope protein is synthesized in the endoplasmic reticulum in the form of heterodimer with protein prM. They play a role in virion budding in the ER, and the newly formed immature particle is covered with 60 spikes composed of heterodimer between precursor prM and envelope protein E. The virion is transported to the Golgi apparatus where the low pH causes dissociation of PrM-E heterodimers and formation of E homodimers. prM-E cleavage is inefficient, and many virions are only partially matured. These uncleaved prM would play a role in immune evasion. In terms of biological role, involved in immune evasion, pathogenesis and viral replication. Once cleaved off the polyprotein, is targeted to three destinations: the viral replication cycle, the plasma membrane and the extracellular compartment. Essential for viral replication. Required for formation of the replication complex and recruitment of other non-structural proteins to the ER-derived membrane structures. Excreted as a hexameric lipoparticle that plays a role against host immune response. Antagonizing the complement function. Binds to the host macrophages and dendritic cells. Inhibits signal transduction originating from Toll-like receptor 3 (TLR3). Functionally, component of the viral RNA replication complex that functions in virion assembly and antagonizes the host immune response. Required cofactor for the serine protease function of NS3. May have membrane-destabilizing activity and form viroporins. Its function is as follows. Displays three enzymatic activities: serine protease, NTPase and RNA helicase. NS3 serine protease, in association with NS2B, performs its autocleavage and cleaves the polyprotein at dibasic sites in the cytoplasm: C-prM, NS2A-NS2B, NS2B-NS3, NS3-NS4A, NS4A-2K and NS4B-NS5. NS3 RNA helicase binds RNA and unwinds dsRNA in the 3' to 5' direction. In terms of biological role, regulates the ATPase activity of the NS3 helicase activity. NS4A allows NS3 helicase to conserve energy during unwinding. Functionally, functions as a signal peptide for NS4B and is required for the interferon antagonism activity of the latter. Induces the formation of ER-derived membrane vesicles where the viral replication takes place. Inhibits interferon (IFN)-induced host STAT1 phosphorylation and nuclear translocation, thereby preventing the establishment of cellular antiviral state by blocking the IFN-alpha/beta pathway. Inhibits STAT2 translocation in the nucleus after IFN-alpha treatment. Its function is as follows. Replicates the viral (+) and (-) genome, and performs the capping of genomes in the cytoplasm. NS5 methylates viral RNA cap at guanine N-7 and ribose 2'-O positions. Besides its role in RNA genome replication, also prevents the establishment of cellular antiviral state by blocking the interferon-alpha/beta (IFN-alpha/beta) signaling pathway. Inhibits host TYK2 and STAT2 phosphorylation, thereby preventing activation of JAK-STAT signaling pathway. The chain is Genome polyprotein from Homo sapiens (Human).